Reading from the N-terminus, the 429-residue chain is Adenylosuccinate synthetase (429 aa).

GTP contacts are provided by residues 12–18 and 40–42; these read GDEGKGK and GHT. Asp13 acts as the Proton acceptor in catalysis. Mg(2+) contacts are provided by Asp13 and Gly40. IMP-binding positions include 13–16, 38–41, Thr128, Arg142, Gln223, Thr238, and Arg302; these read DEGK and NAGH. His41 (proton donor) is an active-site residue. Residue 298–304 participates in substrate binding; the sequence is TTTGRPR. GTP is bound by residues Arg304, 330–332, and 412–414; these read SID and SVG.

This sequence belongs to the adenylosuccinate synthetase family. In terms of assembly, homodimer. It depends on Mg(2+) as a cofactor.

The protein resides in the cytoplasm. It catalyses the reaction IMP + L-aspartate + GTP = N(6)-(1,2-dicarboxyethyl)-AMP + GDP + phosphate + 2 H(+). It functions in the pathway purine metabolism; AMP biosynthesis via de novo pathway; AMP from IMP: step 1/2. Its function is as follows. Plays an important role in the de novo pathway of purine nucleotide biosynthesis. Catalyzes the first committed step in the biosynthesis of AMP from IMP. The sequence is that of Adenylosuccinate synthetase from Exiguobacterium sp. (strain ATCC BAA-1283 / AT1b).